A 333-amino-acid chain; its full sequence is Ketol-acid reductoisomerase (NADP(+)) (333 aa).

The 171-residue stretch at 1-171 (MSNDTQPKIA…GGARANIIKT (171 aa)) folds into the KARI N-terminal Rossmann domain. Residues 14–17 (YGSQ), R37, T42, and 72–75 (DMVQ) contribute to the NADP(+) site. H97 is a catalytic residue. G123 is a binding site for NADP(+). The region spanning 172–317 (TFKEETETDL…KKLRAKMVWL (146 aa)) is the KARI C-terminal knotted domain. Mg(2+) is bound by residues D180, E184, E216, and E220. Residue S241 participates in substrate binding.

The protein belongs to the ketol-acid reductoisomerase family. It depends on Mg(2+) as a cofactor.

The catalysed reaction is (2R)-2,3-dihydroxy-3-methylbutanoate + NADP(+) = (2S)-2-acetolactate + NADPH + H(+). It catalyses the reaction (2R,3R)-2,3-dihydroxy-3-methylpentanoate + NADP(+) = (S)-2-ethyl-2-hydroxy-3-oxobutanoate + NADPH + H(+). The protein operates within amino-acid biosynthesis; L-isoleucine biosynthesis; L-isoleucine from 2-oxobutanoate: step 2/4. Its pathway is amino-acid biosynthesis; L-valine biosynthesis; L-valine from pyruvate: step 2/4. Functionally, involved in the biosynthesis of branched-chain amino acids (BCAA). Catalyzes an alkyl-migration followed by a ketol-acid reduction of (S)-2-acetolactate (S2AL) to yield (R)-2,3-dihydroxy-isovalerate. In the isomerase reaction, S2AL is rearranged via a Mg-dependent methyl migration to produce 3-hydroxy-3-methyl-2-ketobutyrate (HMKB). In the reductase reaction, this 2-ketoacid undergoes a metal-dependent reduction by NADPH to yield (R)-2,3-dihydroxy-isovalerate. This Xanthomonas euvesicatoria pv. vesicatoria (strain 85-10) (Xanthomonas campestris pv. vesicatoria) protein is Ketol-acid reductoisomerase (NADP(+)).